Reading from the N-terminus, the 1483-residue chain is Protein ORF C (1483 aa).

Disordered stretches follow at residues 135-268 (LNDR…GRPP), 306-334 (VPYQNQTRRSRPQGDNEVPPPTEGDLRPV), 383-506 (RRRA…FKRH), 518-653 (SIDD…DRNR), 680-911 (RQRR…TSVS), 949-976 (SSDDGGESGLECLRTPAPTRKTGGRGGS), 1013-1061 (ALQQ…TDLI), and 1089-1299 (FSVA…QPSD). Low complexity predominate over residues 141–153 (AAGSAQRGSAGSR). A compositionally biased stretch (polar residues) spans 157–170 (DNLTPTAADTTGAQ). 2 stretches are compositionally biased toward low complexity: residues 190–206 (ASNVQQQAAAAALRRQQ) and 220–251 (ARQQQPQQPARPPQTTETQTSNNSNTNNTTAT). Over residues 252–264 (RQVFEQQGPSTIQ) the composition is skewed to polar residues. 3 stretches are compositionally biased toward low complexity: residues 424–449 (SGQSSVSQQQPIQTSNVITTDTTTGT), 474–483 (SNEPSRQSQS), and 529–541 (TMTQSGTTSSTTR). A compositionally biased stretch (polar residues) spans 596–607 (GSVTTTQPSGQL). A compositionally biased stretch (basic and acidic residues) spans 609 to 621 (SDDRGRPAPERRQ). The span at 622–640 (QPTSRQTVAQTNIIPNTSG) shows a compositional bias: polar residues. Basic and acidic residues predominate over residues 680-689 (RQRRETEAEH). The segment covering 699-710 (TGVTPQRSNNPF) has biased composition (polar residues). Basic and acidic residues predominate over residues 740–749 (SLREYRRRDP). Low complexity predominate over residues 754 to 774 (GRSYTDGSTTSDGDSSDNSWS). The segment covering 841–876 (NLKSPSPRTKLTRSSSLKSPGTTTRDTQQTSHPLTR) has biased composition (polar residues). The span at 894–909 (DSGGSSDGNTGSSQTS) shows a compositional bias: low complexity. Polar residues-rich tracts occupy residues 1096 to 1109 (GSTSQSVQKPSSIP) and 1116 to 1125 (GPSTMTSQSV). Over residues 1148–1158 (SQSQPSSEQPA) the composition is skewed to low complexity. Residues 1188–1202 (QPQSTVTNTQTQDVL) are compositionally biased toward polar residues. Low complexity-rich tracts occupy residues 1204–1226 (SQGSSKTTQQTTSSTQKSSKTGS) and 1233–1251 (KSALSKTKSSTSDTASGKS). The segment covering 1258–1276 (AASSTDPTTKPTRKVSINA) has biased composition (polar residues). The segment covering 1284 to 1299 (KSSTKQSTKTSTQPSD) has biased composition (low complexity). The stretch at 1408–1438 (AEQIRNLEVDELKILRQQVRERIANERQQQD) forms a coiled coil. Residues 1454–1483 (DMLVSEESAAPTPLPMDTGRFTPKSDVDMS) form a disordered region.

The sequence is that of Protein ORF C from Elephantid herpesvirus 1 (isolate Asian elephant/Berlin/Kiba/1998) (EIHV-1).